A 102-amino-acid chain; its full sequence is NADH-quinone oxidoreductase subunit K (102 aa).

The next 3 helical transmembrane spans lie at 6-26 (LGQG…GVLV), 30-50 (LLFM…AFIV), and 64-84 (FILV…LILL).

The protein belongs to the complex I subunit 4L family. NDH-1 is composed of 14 different subunits. Subunits NuoA, H, J, K, L, M, N constitute the membrane sector of the complex.

Its subcellular location is the cell inner membrane. The catalysed reaction is a quinone + NADH + 5 H(+)(in) = a quinol + NAD(+) + 4 H(+)(out). Its function is as follows. NDH-1 shuttles electrons from NADH, via FMN and iron-sulfur (Fe-S) centers, to quinones in the respiratory chain. The immediate electron acceptor for the enzyme in this species is believed to be ubiquinone. Couples the redox reaction to proton translocation (for every two electrons transferred, four hydrogen ions are translocated across the cytoplasmic membrane), and thus conserves the redox energy in a proton gradient. The protein is NADH-quinone oxidoreductase subunit K of Acidiphilium cryptum (strain JF-5).